Consider the following 231-residue polypeptide: Probable glutathione S-transferase (231 aa).

A GST N-terminal domain is found at 4-96 (PNFELYGYFR…YLEEALPTNA (93 aa)). Glutathione-binding positions include serine 14, glutamine 43, valine 57, 80–81 (QS), glutamine 124, and 128–130 (NLK). The GST C-terminal domain occupies 105–227 (NPVARAHVRT…HWQKQEDTPE (123 aa)).

This sequence belongs to the GST superfamily. Zeta family. Homodimer.

The catalysed reaction is RX + glutathione = an S-substituted glutathione + a halide anion + H(+). In terms of biological role, probable glutathione S-transferase. This is Probable glutathione S-transferase from Coccidioides immitis (strain RS) (Valley fever fungus).